Consider the following 286-residue polypeptide: Ribonuclease H1 (286 aa).

Over residues Glu-101–Ala-115 the composition is skewed to basic and acidic residues. The segment at Glu-101–Pro-127 is disordered. Residues Met-136 to Lys-282 form the RNase H type-1 domain. Positions 145, 186, 210, and 274 each coordinate Mg(2+).

This sequence belongs to the RNase H family. As to quaternary structure, monomer. It depends on Mg(2+) as a cofactor. In terms of tissue distribution, ubiquitous.

The protein localises to the cytoplasm. The catalysed reaction is Endonucleolytic cleavage to 5'-phosphomonoester.. With respect to regulation, in the presence of magnesium, manganese is inhibitory. Its function is as follows. Endonuclease that specifically degrades the RNA of RNA-DNA hybrids. Plays a role in RNA polymerase II (RNAp II) transcription termination by degrading R-loop RNA-DNA hybrid formation at G-rich pause sites located downstream of the poly(A) site and behind the elongating RNAp II. This chain is Ribonuclease H1 (RNASEH1), found in Homo sapiens (Human).